The chain runs to 431 residues: MAGQTVIVSGLNPAAILQSTIGGATPAPAAENDHTRKVVPLSRDALQDFMVSIITQKLQDEKQPFYVLDLGEVVSLMDQWNAGLPNIRPFYAVKCNPEPSFLSMLSAMGSNFDCASRAEIEYVLSLGISPDRIVFANPCKPESDIIFAAKVGVNLTTFDSEDEVYKIRKHHPKCELLLRIKPMDDGNARCPMGPKYGALPEEVEPLLRTAQAARLTVSGVSFHIGSGDADSKAYLGAIAAAKGVFETAARFGMSKMTVLDIGGGFTSGHQFTTASAAVRSALEQHFHDEQELTIIAEPGRFFAETAFTLATTIIGKRVRGELREYWINDGLYGSMNCVLYDHATVNATPLACMSNRSNLNCGGSKTFPSTVFGPTCDALDTVLRDYQLPELQVNDWLIFPNMGAYTKAAGSNFNGFNTSAIVTHLAYAYPS.

At lysine 94 the chain carries N6-(pyridoxal phosphate)lysine. Pyridoxal 5'-phosphate is bound by residues serine 226, glycine 264, and glutamate 297–arginine 300. Tyrosine 340–aspartate 341 is a substrate binding site. The active-site Proton donor; shared with dimeric partner is the cysteine 376. Position 377 (aspartate 377) interacts with substrate. Tyrosine 405 lines the pyridoxal 5'-phosphate pocket.

Belongs to the Orn/Lys/Arg decarboxylase class-II family. In terms of assembly, homodimer. Only the dimer is catalytically active, as the active sites are constructed of residues from both monomers. It depends on pyridoxal 5'-phosphate as a cofactor.

It catalyses the reaction L-ornithine + H(+) = putrescine + CO2. Its pathway is amine and polyamine biosynthesis; putrescine biosynthesis via L-ornithine pathway; putrescine from L-ornithine: step 1/1. Inhibited by antizyme (AZ) in response to polyamine levels. AZ inhibits the assembly of the functional homodimer by binding to ODC monomers and targeting them for ubiquitin-independent proteolytic destruction by the 26S proteasome. Catalyzes the first and rate-limiting step of polyamine biosynthesis that converts ornithine into putrescine, which is the precursor for the polyamines, spermidine and spermine. Polyamines are essential for cell proliferation and are implicated in cellular processes, ranging from DNA replication to apoptosis. In Datura stramonium (Jimsonweed), this protein is Ornithine decarboxylase.